A 308-amino-acid chain; its full sequence is Oxygen-dependent coproporphyrinogen-III oxidase (308 aa).

Position 94 (S94) interacts with substrate. A divalent metal cation-binding residues include H98 and H108. H108 functions as the Proton donor in the catalytic mechanism. Position 110–112 (110–112 (NVR)) interacts with substrate. A divalent metal cation is bound by residues H147 and H177. An important for dimerization region spans residues 242-277 (YVEFNLVWDRGTLFGLQTGGRTESILMSMPPLVRWE). Residue 260-262 (GGR) coordinates substrate.

It belongs to the aerobic coproporphyrinogen-III oxidase family. In terms of assembly, homodimer. A divalent metal cation serves as cofactor.

It is found in the cytoplasm. The catalysed reaction is coproporphyrinogen III + O2 + 2 H(+) = protoporphyrinogen IX + 2 CO2 + 2 H2O. It functions in the pathway porphyrin-containing compound metabolism; protoporphyrin-IX biosynthesis; protoporphyrinogen-IX from coproporphyrinogen-III (O2 route): step 1/1. Functionally, involved in the heme biosynthesis. Catalyzes the aerobic oxidative decarboxylation of propionate groups of rings A and B of coproporphyrinogen-III to yield the vinyl groups in protoporphyrinogen-IX. The protein is Oxygen-dependent coproporphyrinogen-III oxidase of Yersinia enterocolitica serotype O:8 / biotype 1B (strain NCTC 13174 / 8081).